The primary structure comprises 359 residues: Guanine nucleotide-binding protein subunit alpha-11 (359 aa).

2 S-palmitoyl cysteine lipidation sites follow: Cys-9 and Cys-10. Positions 38–359 (RELKLLLLGT…QLNLKEYNLV (322 aa)) constitute a G-alpha domain. The interval 41-54 (KLLLLGTGESGKST) is G1 motif. Residues 46–53 (GTGESGKS) and 180–183 (LRVR) contribute to the GTP site. Ser-53 is a Mg(2+) binding site. Positions 178 to 186 (DVLRVRVPT) are G2 motif. Thr-186 provides a ligand contact to Mg(2+). The interval 201–210 (FRMVDVGGQR) is G3 motif. The G4 motif stretch occupies residues 270–277 (ILFLNKKD). Residues 274 to 277 (NKKD) and Ala-331 each bind GTP. The interval 329–334 (TCATDT) is G5 motif.

This sequence belongs to the G-alpha family. G(q) subfamily. In terms of assembly, g proteins are composed of 3 units; alpha, beta and gamma. The alpha chain contains the guanine nucleotide binding site. Interacts with RGS22. Interacts with NTSR1.

It is found in the cell membrane. Its subcellular location is the cytoplasm. It catalyses the reaction GTP + H2O = GDP + phosphate + H(+). Functionally, guanine nucleotide-binding proteins (G proteins) function as transducers downstream of G protein-coupled receptors (GPCRs) in numerous signaling cascades. The alpha chain contains the guanine nucleotide binding site and alternates between an active, GTP-bound state and an inactive, GDP-bound state. Signaling by an activated GPCR promotes GDP release and GTP binding. The alpha subunit has a low GTPase activity that converts bound GTP to GDP, thereby terminating the signal. Both GDP release and GTP hydrolysis are modulated by numerous regulatory proteins. Signaling is mediated via phospholipase C-beta-dependent inositol lipid hydrolysis for signal propagation: activates phospholipase C-beta: following GPCR activation, GNA11 activates PLC-beta (PLCB1, PLCB2, PLCB3 or PLCB4), leading to production of diacylglycerol (DAG) and inositol 1,4,5-trisphosphate (IP3). Transduces FFAR4 signaling in response to long-chain fatty acids (LCFAs). Together with GNAQ, required for heart development. In the respiratory epithelium, transmits OXGR1-dependent signals that lead to downstream intracellular Ca(2+) release and mucocilliary clearance of airborne pathogens. This is Guanine nucleotide-binding protein subunit alpha-11 (GNA11) from Sus scrofa (Pig).